A 307-amino-acid polypeptide reads, in one-letter code: OTU domain-containing protein 2 (307 aa).

2 disordered regions span residues 23–46 (ENKD…RKEV) and 96–130 (SRDE…AKRD). Positions 103–114 (QNVPVQQQQQGQ) are enriched in low complexity. Positions 167–307 (LKQFDIQPDG…GEHYNSLHDS (141 aa)) constitute an OTU domain.

In Saccharomyces cerevisiae (strain ATCC 204508 / S288c) (Baker's yeast), this protein is OTU domain-containing protein 2 (OTU2).